The primary structure comprises 439 residues: Divalent metal cation transporter MntH (439 aa).

11 consecutive transmembrane segments (helical) span residues 32 to 52, 67 to 87, 121 to 141, 144 to 164, 173 to 193, 214 to 234, 261 to 281, 301 to 321, 350 to 370, 371 to 391, and 406 to 426; these read GASM…AYMD, GYAL…FQSL, IAAM…LSLL, MPLL…LLLE, LAIG…LFIT, ALLI…LFLH, VVVA…MAAG, APLL…ASGI, AVTM…TQAL, VLSQ…LLWF, and FIAV…AVLI.

It belongs to the NRAMP family.

Its subcellular location is the cell inner membrane. In terms of biological role, h(+)-stimulated, divalent metal cation uptake system. This chain is Divalent metal cation transporter MntH, found in Verminephrobacter eiseniae (strain EF01-2).